We begin with the raw amino-acid sequence, 287 residues long: Phosphatidylserine decarboxylase proenzyme (287 aa).

Residues Asp89, His146, and Ser252 each act as charge relay system; for autoendoproteolytic cleavage activity in the active site. Residue Ser252 is the Schiff-base intermediate with substrate; via pyruvic acid; for decarboxylase activity of the active site. Residue Ser252 is modified to Pyruvic acid (Ser); by autocatalysis.

This sequence belongs to the phosphatidylserine decarboxylase family. PSD-B subfamily. Prokaryotic type I sub-subfamily. As to quaternary structure, heterodimer of a large membrane-associated beta subunit and a small pyruvoyl-containing alpha subunit. Pyruvate is required as a cofactor. Post-translationally, is synthesized initially as an inactive proenzyme. Formation of the active enzyme involves a self-maturation process in which the active site pyruvoyl group is generated from an internal serine residue via an autocatalytic post-translational modification. Two non-identical subunits are generated from the proenzyme in this reaction, and the pyruvate is formed at the N-terminus of the alpha chain, which is derived from the carboxyl end of the proenzyme. The autoendoproteolytic cleavage occurs by a canonical serine protease mechanism, in which the side chain hydroxyl group of the serine supplies its oxygen atom to form the C-terminus of the beta chain, while the remainder of the serine residue undergoes an oxidative deamination to produce ammonia and the pyruvoyl prosthetic group on the alpha chain. During this reaction, the Ser that is part of the protease active site of the proenzyme becomes the pyruvoyl prosthetic group, which constitutes an essential element of the active site of the mature decarboxylase.

Its subcellular location is the cell membrane. The enzyme catalyses a 1,2-diacyl-sn-glycero-3-phospho-L-serine + H(+) = a 1,2-diacyl-sn-glycero-3-phosphoethanolamine + CO2. The protein operates within phospholipid metabolism; phosphatidylethanolamine biosynthesis; phosphatidylethanolamine from CDP-diacylglycerol: step 2/2. Functionally, catalyzes the formation of phosphatidylethanolamine (PtdEtn) from phosphatidylserine (PtdSer). The chain is Phosphatidylserine decarboxylase proenzyme from Shewanella pealeana (strain ATCC 700345 / ANG-SQ1).